Consider the following 199-residue polypeptide: Desiccation stress protein DSP-22, chloroplastic (199 aa).

The N-terminal 52 residues, 1–52, are a transit peptide targeting the chloroplast; the sequence is MASSTCYATIPAMSCRGQSTITRFGPNNLFLGKQSYELPLMRRNAKFTVRSM. Over residues 53-62 the composition is skewed to basic and acidic residues; that stretch reads REDNEKEEQQ. The interval 53 to 82 is disordered; it reads REDNEKEEQQQQKQQQTHDGGPDLTPNRTE. The next 2 helical transmembrane spans lie at 130-152 and 172-191; these read FNGGVMWFLLTSAVLVLATLIPI and IWNGRFAMIGLVALAFTEYV.

Belongs to the ELIP/psbS family. As to expression, preferentially localized in the chloroplast-rich palisade parenchyma cells, in extracts of desiccated leaves, in seeds, but not in roots or untreated leaves.

It is found in the plastid. The protein resides in the chloroplast thylakoid membrane. Functionally, possibly exerts a protective role during water loss. The chain is Desiccation stress protein DSP-22, chloroplastic (DSP-22) from Craterostigma plantagineum (Blue gem).